We begin with the raw amino-acid sequence, 223 residues long: Virulence transcriptional regulatory protein PhoP (223 aa).

The Response regulatory domain maps to 2–116 (RVLVVEDNAL…EVMARMQALM (115 aa)). Aspartate 51 is subject to 4-aspartylphosphate. The segment at residues 124–222 (SQVISLPPFQ…VRGQGYLFEL (99 aa)) is a DNA-binding region (ompR/PhoB-type).

Phosphorylated by PhoQ.

It localises to the cytoplasm. Member of the two-component regulatory system PhoQ/PhoP involved in virulence and adaptation to low Mg(2+) environments. Necessary for resistance to killing by polymorphonuclear leukocytes (PMNs) and cationic antimicrobial peptides (CAMP) they produce. This Shigella flexneri protein is Virulence transcriptional regulatory protein PhoP (phoP).